A 697-amino-acid chain; its full sequence is Polyribonucleotide nucleotidyltransferase (697 aa).

Asp-488 and Asp-494 together coordinate Mg(2+). The region spanning 555-614 (PTLLTLKINPDKIRDVIGKGGATIRALTEETGCTIDIEDDGSVKIYGETREKADEAVRRV) is the KH domain. In terms of domain architecture, S1 motif spans 624 to 692 (GAIYEGKVTR…QRGRIKLSMK (69 aa)).

The protein belongs to the polyribonucleotide nucleotidyltransferase family. Component of the RNA degradosome, which is a multiprotein complex involved in RNA processing and mRNA degradation. It depends on Mg(2+) as a cofactor.

It is found in the cytoplasm. The catalysed reaction is RNA(n+1) + phosphate = RNA(n) + a ribonucleoside 5'-diphosphate. Its function is as follows. Involved in mRNA degradation. Catalyzes the phosphorolysis of single-stranded polyribonucleotides processively in the 3'- to 5'-direction. This is Polyribonucleotide nucleotidyltransferase from Alcanivorax borkumensis (strain ATCC 700651 / DSM 11573 / NCIMB 13689 / SK2).